Reading from the N-terminus, the 708-residue chain is Lactotransferrin (708 aa).

The signal sequence occupies residues 1 to 19 (MKLLFLALLSLLALGPSLA). 2 Transferrin-like domains span residues 25 to 352 (VRWC…NLKE) and 364 to 693 (VVWC…NLRQ). 2 disulfide bridges follow: Cys-28–Cys-64 and Cys-38–Cys-55. Asp-79 serves as a coordination point for Fe(3+). The active site involves Arg-92. Position 111 (Tyr-111) interacts with Fe(3+). 5 disulfides stabilise this stretch: Cys-134–Cys-217, Cys-176–Cys-192, Cys-179–Cys-202, Cys-189–Cys-200, and Cys-250–Cys-264. Thr-136 contributes to the hydrogencarbonate binding site. Residue Asn-139 is glycosylated (N-linked (GlcNAc...) asparagine). 3 residues coordinate hydrogencarbonate: Arg-140, Ala-142, and Gly-143. Tyr-211 provides a ligand contact to Fe(3+). His-272 contacts Fe(3+). Residue Ser-278 is the Nucleophile of the active site. Disulfide bonds link Cys-367/Cys-399 and Cys-377/Cys-390. N-linked (GlcNAc...) asparagine glycosylation occurs at Asn-385. Fe(3+) is bound by residues Asp-414 and Asp-452. Intrachain disulfides connect Cys-476–Cys-551, Cys-510–Cys-524, Cys-521–Cys-534, and Cys-592–Cys-606. Residues Thr-478, Arg-482, Ala-484, and Gly-485 each coordinate hydrogencarbonate. Asn-495 is a glycosylation site (N-linked (GlcNAc...) asparagine). Fe(3+) is bound at residue Tyr-545. Fe(3+) is bound at residue His-614.

The protein belongs to the transferrin family. Monomer. Found in a complex with LTF, CLU, EPPIN and SEMG1. Interacts with prey activated coagulation factor X; the interaction inhibits coagulation factor X catalytic activity. Found in a complex with MPO and LTF; interacts directly with CP, allows Fe(3+) incorporation into LTF and activation of CP ferroxidase activity. In terms of processing, N-glycosylated. Glycosylation is important for draculin anticoagulant activity. Probably also O-glycosylated. As to expression, expressed in the submaxillary gland and secreted in the saliva (at protein level).

It is found in the secreted. In terms of biological role, transferrins are iron binding transport proteins which can bind two Fe(3+) ions in association with the binding of an anion, usually bicarbonate. Major iron-binding and multifunctional protein found in exocrine fluids such as breast milk and mucosal secretions. Has antimicrobial activity. Antimicrobial properties may include bacteriostasis, which is related to its ability to sequester free iron and thus inhibit microbial growth, as well as direct bactericidal properties leading to the release of lipopolysaccharides from the bacterial outer membrane. May have anabolic, differentiating and anti-apoptotic effects on osteoblasts and may also inhibit osteoclastogenesis, possibly playing a role in the regulation of bone growth. May interfere with the lipopolysaccharide (LPS)-stimulated TLR4 signaling. Functionally, the lactotransferrin transferrin-like domain 1 functions as a serine protease of the peptidase S60 family that cuts arginine rich regions. This function contributes to the antimicrobial activity. Shows a preferential cleavage at -Arg-Ser-Arg-Arg-|- and -Arg-Arg-Ser-Arg-|-, and of Z-Phe-Arg-|-aminomethylcoumarin sites. Its function is as follows. Acts as an anticoagulant of the blood coagulation cascade of the bat's prey by inhibiting coagulation factor IX and activated coagulation factor X. This Desmodus rotundus (Vampire bat) protein is Lactotransferrin.